The following is a 399-amino-acid chain: Tryptophan synthase beta chain (399 aa).

The residue at position 92 (lysine 92) is an N6-(pyridoxal phosphate)lysine.

This sequence belongs to the TrpB family. In terms of assembly, tetramer of two alpha and two beta chains. It depends on pyridoxal 5'-phosphate as a cofactor.

It carries out the reaction (1S,2R)-1-C-(indol-3-yl)glycerol 3-phosphate + L-serine = D-glyceraldehyde 3-phosphate + L-tryptophan + H2O. It participates in amino-acid biosynthesis; L-tryptophan biosynthesis; L-tryptophan from chorismate: step 5/5. The beta subunit is responsible for the synthesis of L-tryptophan from indole and L-serine. The polypeptide is Tryptophan synthase beta chain (Legionella pneumophila (strain Paris)).